The primary structure comprises 345 residues: Protein-glutamate methylesterase/protein-glutamine glutaminase 1 (345 aa).

Residues 8-123 (SVLVIDDSAH…FEAMEALRVE (116 aa)) form the Response regulatory domain. Asp59 carries the post-translational modification 4-aspartylphosphate. Residues 151 to 344 (AGEPPLVVAV…PALAALARRR (194 aa)) form the CheB-type methylesterase domain. Active-site residues include Ser163, His190, and Asp286.

The protein belongs to the CheB family. Post-translationally, phosphorylated by CheA. Phosphorylation of the N-terminal regulatory domain activates the methylesterase activity.

The protein localises to the cytoplasm. The enzyme catalyses [protein]-L-glutamate 5-O-methyl ester + H2O = L-glutamyl-[protein] + methanol + H(+). The catalysed reaction is L-glutaminyl-[protein] + H2O = L-glutamyl-[protein] + NH4(+). Involved in chemotaxis. Part of a chemotaxis signal transduction system that modulates chemotaxis in response to various stimuli. Catalyzes the demethylation of specific methylglutamate residues introduced into the chemoreceptors (methyl-accepting chemotaxis proteins or MCP) by CheR. Also mediates the irreversible deamidation of specific glutamine residues to glutamic acid. The chain is Protein-glutamate methylesterase/protein-glutamine glutaminase 1 from Myxococcus xanthus (strain DK1622).